The chain runs to 77 residues: NAD(P)H-quinone oxidoreductase subunit L (77 aa).

The next 2 membrane-spanning stretches (helical) occupy residues 12-32 and 47-67; these read FVAY…ILFY and LGVY…SPFL.

The protein belongs to the complex I NdhL subunit family. In terms of assembly, NDH-1 can be composed of about 15 different subunits; different subcomplexes with different compositions have been identified which probably have different functions.

It localises to the cellular thylakoid membrane. It catalyses the reaction a plastoquinone + NADH + (n+1) H(+)(in) = a plastoquinol + NAD(+) + n H(+)(out). The enzyme catalyses a plastoquinone + NADPH + (n+1) H(+)(in) = a plastoquinol + NADP(+) + n H(+)(out). NDH-1 shuttles electrons from an unknown electron donor, via FMN and iron-sulfur (Fe-S) centers, to quinones in the respiratory and/or the photosynthetic chain. The immediate electron acceptor for the enzyme in this species is believed to be plastoquinone. Couples the redox reaction to proton translocation, and thus conserves the redox energy in a proton gradient. Cyanobacterial NDH-1 also plays a role in inorganic carbon-concentration. This is NAD(P)H-quinone oxidoreductase subunit L from Prochlorococcus marinus (strain MIT 9515).